Consider the following 590-residue polypeptide: UvrABC system protein C (590 aa).

Residues 14–91 enclose the GIY-YIG domain; the sequence is DQPGCYLMKD…IKKYDPKYNV (78 aa). Residues 196–231 enclose the UVR domain; it reads NEIKKELEAKMAEAAEKLEFERAKEFRDQLAHIEST.

The protein belongs to the UvrC family. Interacts with UvrB in an incision complex.

The protein resides in the cytoplasm. In terms of biological role, the UvrABC repair system catalyzes the recognition and processing of DNA lesions. UvrC both incises the 5' and 3' sides of the lesion. The N-terminal half is responsible for the 3' incision and the C-terminal half is responsible for the 5' incision. In Bacillus velezensis (strain DSM 23117 / BGSC 10A6 / LMG 26770 / FZB42) (Bacillus amyloliquefaciens subsp. plantarum), this protein is UvrABC system protein C.